The following is a 137-amino-acid chain: Prostate and testis expressed protein 13 (137 aa).

The first 20 residues, 1–20, serve as a signal peptide directing secretion; the sequence is MFQKLLLSVFIILLMDVGER. The UPAR/Ly6 domain maps to 28–114; sequence RHCNLCSHYD…CIDRNYCNDG (87 aa). Intrachain disulfides connect Cys30–Cys60, Cys33–Cys41, Cys48–Cys84, Cys87–Cys104, and Cys105–Cys111. Asn57 carries N-linked (GlcNAc...) asparagine glycosylation.

It belongs to the PATE family. In terms of tissue distribution, strongly expressed in the epididymis, including the initial segment, caput, corpus and cauda regions. Weakly expressed in prostate.

The protein localises to the secreted. The chain is Prostate and testis expressed protein 13 from Mus musculus (Mouse).